The primary structure comprises 207 residues: Large ribosomal subunit protein uL4 (207 aa).

A disordered region spans residues 54–76; it reads RSAVRGGGRKPWRQKGTGRARQG. The segment covering 60 to 71 has biased composition (basic residues); sequence GGRKPWRQKGTG.

Belongs to the universal ribosomal protein uL4 family. As to quaternary structure, part of the 50S ribosomal subunit.

Functionally, one of the primary rRNA binding proteins, this protein initially binds near the 5'-end of the 23S rRNA. It is important during the early stages of 50S assembly. It makes multiple contacts with different domains of the 23S rRNA in the assembled 50S subunit and ribosome. Its function is as follows. Forms part of the polypeptide exit tunnel. This is Large ribosomal subunit protein uL4 from Staphylococcus haemolyticus (strain JCSC1435).